The following is a 473-amino-acid chain: tRNA modification GTPase MnmE (473 aa).

(6S)-5-formyl-5,6,7,8-tetrahydrofolate is bound by residues arginine 30, glutamate 95, and arginine 134. The TrmE-type G domain occupies 230 to 394 (GVAAVIAGRP…LKSTMAGMVE (165 aa)). Residues 240 to 245 (NAGKST), 259 to 265 (SHMPGTT), and 284 to 287 (DTAG) each bind GTP. Serine 244 and threonine 265 together coordinate Mg(2+). (6S)-5-formyl-5,6,7,8-tetrahydrofolate is bound at residue lysine 473.

It belongs to the TRAFAC class TrmE-Era-EngA-EngB-Septin-like GTPase superfamily. TrmE GTPase family. In terms of assembly, homodimer. Heterotetramer of two MnmE and two MnmG subunits. It depends on K(+) as a cofactor.

It is found in the cytoplasm. Its function is as follows. Exhibits a very high intrinsic GTPase hydrolysis rate. Involved in the addition of a carboxymethylaminomethyl (cmnm) group at the wobble position (U34) of certain tRNAs, forming tRNA-cmnm(5)s(2)U34. This chain is tRNA modification GTPase MnmE, found in Chlorobium phaeovibrioides (strain DSM 265 / 1930) (Prosthecochloris vibrioformis (strain DSM 265)).